A 114-amino-acid polypeptide reads, in one-letter code: Iron-sulfur cluster insertion protein ErpA (114 aa).

Iron-sulfur cluster contacts are provided by cysteine 42, cysteine 106, and cysteine 108.

The protein belongs to the HesB/IscA family. Homodimer. The cofactor is iron-sulfur cluster.

Functionally, required for insertion of 4Fe-4S clusters for at least IspG. The chain is Iron-sulfur cluster insertion protein ErpA from Cronobacter sakazakii (strain ATCC BAA-894) (Enterobacter sakazakii).